Consider the following 166-residue polypeptide: Phosphopantetheine adenylyltransferase (166 aa).

A substrate-binding site is contributed by Ser10. ATP-binding positions include 10–11 (SF) and His18. Substrate-binding residues include Lys42, Ala79, and Arg93. Residues 94–96 (GLR), Glu104, and 129–135 (VRPITAT) contribute to the ATP site.

The protein belongs to the bacterial CoaD family. In terms of assembly, homohexamer. The cofactor is Mg(2+).

The protein localises to the cytoplasm. It carries out the reaction (R)-4'-phosphopantetheine + ATP + H(+) = 3'-dephospho-CoA + diphosphate. Its pathway is cofactor biosynthesis; coenzyme A biosynthesis; CoA from (R)-pantothenate: step 4/5. Its function is as follows. Reversibly transfers an adenylyl group from ATP to 4'-phosphopantetheine, yielding dephospho-CoA (dPCoA) and pyrophosphate. This is Phosphopantetheine adenylyltransferase from Methylobacterium sp. (strain 4-46).